Consider the following 310-residue polypeptide: tRNA dimethylallyltransferase (310 aa).

24–31 (GPTASGKT) lines the ATP pocket. Position 26–31 (26–31 (TASGKT)) interacts with substrate. Residues 49 to 52 (DSRQ) form an interaction with substrate tRNA region.

Belongs to the IPP transferase family. In terms of assembly, monomer. Mg(2+) serves as cofactor.

It catalyses the reaction adenosine(37) in tRNA + dimethylallyl diphosphate = N(6)-dimethylallyladenosine(37) in tRNA + diphosphate. In terms of biological role, catalyzes the transfer of a dimethylallyl group onto the adenine at position 37 in tRNAs that read codons beginning with uridine, leading to the formation of N6-(dimethylallyl)adenosine (i(6)A). The polypeptide is tRNA dimethylallyltransferase (Synechococcus sp. (strain CC9311)).